Here is a 566-residue protein sequence, read N- to C-terminus: Proline--tRNA ligase 1 (566 aa).

Belongs to the class-II aminoacyl-tRNA synthetase family. ProS type 1 subfamily. In terms of assembly, homodimer.

It localises to the cytoplasm. It carries out the reaction tRNA(Pro) + L-proline + ATP = L-prolyl-tRNA(Pro) + AMP + diphosphate. Functionally, catalyzes the attachment of proline to tRNA(Pro) in a two-step reaction: proline is first activated by ATP to form Pro-AMP and then transferred to the acceptor end of tRNA(Pro). As ProRS can inadvertently accommodate and process non-cognate amino acids such as alanine and cysteine, to avoid such errors it has two additional distinct editing activities against alanine. One activity is designated as 'pretransfer' editing and involves the tRNA(Pro)-independent hydrolysis of activated Ala-AMP. The other activity is designated 'posttransfer' editing and involves deacylation of mischarged Ala-tRNA(Pro). The misacylated Cys-tRNA(Pro) is not edited by ProRS. This Bacillus cereus (strain ATCC 14579 / DSM 31 / CCUG 7414 / JCM 2152 / NBRC 15305 / NCIMB 9373 / NCTC 2599 / NRRL B-3711) protein is Proline--tRNA ligase 1.